We begin with the raw amino-acid sequence, 306 residues long: Aspartate carbamoyltransferase catalytic subunit (306 aa).

Residues Arg55 and Thr56 each coordinate carbamoyl phosphate. Residue Lys84 participates in L-aspartate binding. The carbamoyl phosphate site is built by Arg105, His133, and Gln136. Positions 166 and 227 each coordinate L-aspartate. Residues Leu265 and Pro266 each contribute to the carbamoyl phosphate site.

The protein belongs to the aspartate/ornithine carbamoyltransferase superfamily. ATCase family. Heterododecamer (2C3:3R2) of six catalytic PyrB chains organized as two trimers (C3), and six regulatory PyrI chains organized as three dimers (R2).

It carries out the reaction carbamoyl phosphate + L-aspartate = N-carbamoyl-L-aspartate + phosphate + H(+). It participates in pyrimidine metabolism; UMP biosynthesis via de novo pathway; (S)-dihydroorotate from bicarbonate: step 2/3. In terms of biological role, catalyzes the condensation of carbamoyl phosphate and aspartate to form carbamoyl aspartate and inorganic phosphate, the committed step in the de novo pyrimidine nucleotide biosynthesis pathway. The chain is Aspartate carbamoyltransferase catalytic subunit from Neisseria meningitidis serogroup A / serotype 4A (strain DSM 15465 / Z2491).